The chain runs to 480 residues: Thiamine biosynthesis bifunctional protein ThiM/ThiE (480 aa).

Residues 1–287 form a hydroxyethylthiazole kinase region; sequence MSTLPERVRE…LYVLVSGATP (287 aa). Met-40 is a 5-(2-hydroxyethyl)-4-methylthiazole binding site. Positions 116 and 164 each coordinate ATP. Gly-191 contacts 5-(2-hydroxyethyl)-4-methylthiazole. The tract at residues 288–480 is thiamine-phosphate synthase; it reads PDVLEAVLQA…VRRAKGEVSA (193 aa). 4-amino-2-methyl-5-(diphosphooxymethyl)pyrimidine contacts are provided by residues 303 to 307 and Asn-335; that span reads QFREK. Asp-336 and Asp-355 together coordinate Mg(2+). Residue Thr-374 coordinates 4-amino-2-methyl-5-(diphosphooxymethyl)pyrimidine. Residue 400-402 coordinates 2-[(2R,5Z)-2-carboxy-4-methylthiazol-5(2H)-ylidene]ethyl phosphate; it reads TPS. Lys-403 serves as a coordination point for 4-amino-2-methyl-5-(diphosphooxymethyl)pyrimidine. Residues Gly-431 and 451 to 452 each bind 2-[(2R,5Z)-2-carboxy-4-methylthiazol-5(2H)-ylidene]ethyl phosphate; that span reads IS.

It in the N-terminal section; belongs to the Thz kinase family. In the C-terminal section; belongs to the thiamine-phosphate synthase family. Mg(2+) is required as a cofactor.

The enzyme catalyses 5-(2-hydroxyethyl)-4-methylthiazole + ATP = 4-methyl-5-(2-phosphooxyethyl)-thiazole + ADP + H(+). It catalyses the reaction 2-[(2R,5Z)-2-carboxy-4-methylthiazol-5(2H)-ylidene]ethyl phosphate + 4-amino-2-methyl-5-(diphosphooxymethyl)pyrimidine + 2 H(+) = thiamine phosphate + CO2 + diphosphate. The catalysed reaction is 2-(2-carboxy-4-methylthiazol-5-yl)ethyl phosphate + 4-amino-2-methyl-5-(diphosphooxymethyl)pyrimidine + 2 H(+) = thiamine phosphate + CO2 + diphosphate. It carries out the reaction 4-methyl-5-(2-phosphooxyethyl)-thiazole + 4-amino-2-methyl-5-(diphosphooxymethyl)pyrimidine + H(+) = thiamine phosphate + diphosphate. Its pathway is cofactor biosynthesis; thiamine diphosphate biosynthesis; 4-methyl-5-(2-phosphoethyl)-thiazole from 5-(2-hydroxyethyl)-4-methylthiazole: step 1/1. The protein operates within cofactor biosynthesis; thiamine diphosphate biosynthesis; thiamine phosphate from 4-amino-2-methyl-5-diphosphomethylpyrimidine and 4-methyl-5-(2-phosphoethyl)-thiazole: step 1/1. Condenses 4-methyl-5-(beta-hydroxyethyl)thiazole monophosphate (THZ-P) and 2-methyl-4-amino-5-hydroxymethyl pyrimidine pyrophosphate (HMP-PP) to form thiamine monophosphate (TMP). The sequence is that of Thiamine biosynthesis bifunctional protein ThiM/ThiE (thiM/thiE) from Symbiobacterium thermophilum (strain DSM 24528 / JCM 14929 / IAM 14863 / T).